We begin with the raw amino-acid sequence, 633 residues long: 1-deoxy-D-xylulose-5-phosphate synthase (633 aa).

The segment at methionine 1–glutamine 22 is disordered. Residues histidine 87 and glycine 128–serine 130 contribute to the thiamine diphosphate site. Aspartate 159 provides a ligand contact to Mg(2+). Residues glycine 160–alanine 161, asparagine 188, phenylalanine 295, and glutamate 378 each bind thiamine diphosphate. Asparagine 188 is a Mg(2+) binding site.

This sequence belongs to the transketolase family. DXPS subfamily. Homodimer. Mg(2+) is required as a cofactor. It depends on thiamine diphosphate as a cofactor.

It catalyses the reaction D-glyceraldehyde 3-phosphate + pyruvate + H(+) = 1-deoxy-D-xylulose 5-phosphate + CO2. The protein operates within metabolic intermediate biosynthesis; 1-deoxy-D-xylulose 5-phosphate biosynthesis; 1-deoxy-D-xylulose 5-phosphate from D-glyceraldehyde 3-phosphate and pyruvate: step 1/1. Its function is as follows. Catalyzes the acyloin condensation reaction between C atoms 2 and 3 of pyruvate and glyceraldehyde 3-phosphate to yield 1-deoxy-D-xylulose-5-phosphate (DXP). The sequence is that of 1-deoxy-D-xylulose-5-phosphate synthase from Pseudomonas fluorescens (strain ATCC BAA-477 / NRRL B-23932 / Pf-5).